A 21-amino-acid chain; its full sequence is GLLGSIGKVLGGYLAEKLKPK.

As to expression, expressed by the skin dorsal glands.

Its subcellular location is the secreted. Functionally, has no antimicrobial activity. Strongly inhibits the formation of NO by neuronal nitric oxide synthase at micromolar concentrations. In Ranoidea dahlii (Dahl's aquatic frog), this protein is Dahlein-5.4.